The following is a 105-amino-acid chain: Flowering-promoting factor 1-like protein 5 (105 aa).

Belongs to the FPF1 family.

The protein is Flowering-promoting factor 1-like protein 5 of Oryza sativa subsp. japonica (Rice).